Reading from the N-terminus, the 65-residue chain is uncharacterized protein (65 aa).

The Cytoplasmic portion of the chain corresponds to 1–20 (MRFSNCFNKFKFCIGTEKKY). The chain crosses the membrane as a helical span at residues 21–43 (SFPICTSTYTSFSLFACIWSIFI). At 44–65 (HISLNKSFIYQKSWYYSFFQNR) the chain is on the extracellular side.

It is found in the host membrane. This is an uncharacterized protein from Acidianus sp. F28 (AFV-2).